We begin with the raw amino-acid sequence, 263 residues long: Phosphatidylglycerol--prolipoprotein diacylglyceryl transferase (263 aa).

Helical transmembrane passes span 6–26 (VIFSIGPVSIYWYSLAYVLGI), 50–70 (LLTAVIIGIILGGRLGYVLIY), 85–105 (TWEGGMSFHGGAIGVLLAVII), and 112–132 (IPIFYTLDLISCGVPIGLLLG). R133 serves as a coordination point for a 1,2-diacyl-sn-glycero-3-phospho-(1'-sn-glycerol). Helical transmembrane passes span 169–189 (LYEAFFEGALLFVVVNSLFYL), 197–217 (GATTGVAVMLYGVARFMVEFF), and 233–253 (MGQLLSIPMILLGMLIYLGAL).

This sequence belongs to the Lgt family.

Its subcellular location is the cell membrane. It carries out the reaction L-cysteinyl-[prolipoprotein] + a 1,2-diacyl-sn-glycero-3-phospho-(1'-sn-glycerol) = an S-1,2-diacyl-sn-glyceryl-L-cysteinyl-[prolipoprotein] + sn-glycerol 1-phosphate + H(+). It functions in the pathway protein modification; lipoprotein biosynthesis (diacylglyceryl transfer). Functionally, catalyzes the transfer of the diacylglyceryl group from phosphatidylglycerol to the sulfhydryl group of the N-terminal cysteine of a prolipoprotein, the first step in the formation of mature lipoproteins. The sequence is that of Phosphatidylglycerol--prolipoprotein diacylglyceryl transferase from Wolbachia pipientis subsp. Culex pipiens (strain wPip).